Reading from the N-terminus, the 353-residue chain is Photosystem II protein D1 (353 aa).

Threonine 2 bears the N-acetylthreonine mark. Phosphothreonine is present on threonine 2. 3 consecutive transmembrane segments (helical) span residues tyrosine 29–serine 46, histidine 118–leucine 133, and tryptophan 142–alanine 156. Residue histidine 118 coordinates chlorophyll a. A pheophytin a-binding site is contributed by tyrosine 126. Residues aspartate 170 and glutamate 189 each contribute to the [CaMn4O5] cluster site. A helical transmembrane segment spans residues phenylalanine 197–leucine 218. Chlorophyll a is bound at residue histidine 198. Residues histidine 215 and serine 264–phenylalanine 265 each bind a quinone. Position 215 (histidine 215) interacts with Fe cation. Position 272 (histidine 272) interacts with Fe cation. Residues phenylalanine 274–leucine 288 traverse the membrane as a helical segment. [CaMn4O5] cluster-binding residues include histidine 332, glutamate 333, aspartate 342, and alanine 344. A propeptide spanning residues alanine 345–glycine 353 is cleaved from the precursor.

It belongs to the reaction center PufL/M/PsbA/D family. In terms of assembly, PSII is composed of 1 copy each of membrane proteins PsbA, PsbB, PsbC, PsbD, PsbE, PsbF, PsbH, PsbI, PsbJ, PsbK, PsbL, PsbM, PsbT, PsbX, PsbY, PsbZ, Psb30/Ycf12, at least 3 peripheral proteins of the oxygen-evolving complex and a large number of cofactors. It forms dimeric complexes. The D1/D2 heterodimer binds P680, chlorophylls that are the primary electron donor of PSII, and subsequent electron acceptors. It shares a non-heme iron and each subunit binds pheophytin, quinone, additional chlorophylls, carotenoids and lipids. D1 provides most of the ligands for the Mn4-Ca-O5 cluster of the oxygen-evolving complex (OEC). There is also a Cl(-1) ion associated with D1 and D2, which is required for oxygen evolution. The PSII complex binds additional chlorophylls, carotenoids and specific lipids. is required as a cofactor. Post-translationally, tyr-161 forms a radical intermediate that is referred to as redox-active TyrZ, YZ or Y-Z. C-terminally processed by CTPA; processing is essential to allow assembly of the oxygen-evolving complex and thus photosynthetic growth.

It localises to the plastid. Its subcellular location is the chloroplast thylakoid membrane. The enzyme catalyses 2 a plastoquinone + 4 hnu + 2 H2O = 2 a plastoquinol + O2. In terms of biological role, photosystem II (PSII) is a light-driven water:plastoquinone oxidoreductase that uses light energy to abstract electrons from H(2)O, generating O(2) and a proton gradient subsequently used for ATP formation. It consists of a core antenna complex that captures photons, and an electron transfer chain that converts photonic excitation into a charge separation. The D1/D2 (PsbA/PsbD) reaction center heterodimer binds P680, the primary electron donor of PSII as well as several subsequent electron acceptors. The chain is Photosystem II protein D1 from Oenothera parviflora (Small-flowered evening primrose).